Reading from the N-terminus, the 1877-residue chain is Neuron navigator 1 (1877 aa).

M1 carries the N-acetylmethionine modification. Residues 1–59 (MLGSSVKSVQPEVELSSGGGDEGADEPRGAGRKAAAADGRGMLPKRAKAPGGGGGMAKA) are disordered. Low complexity predominate over residues 32–41 (RKAAAADGRG). Residues S90, S142, and S152 each carry the phosphoserine modification. The segment at 114-225 (DMAKAPKGLG…PVPSAKGQEE (112 aa)) is disordered. A Phosphothreonine modification is found at T159. Phosphoserine occurs at positions 194 and 199. Positions 205-214 (SSKAKAQKSS) are enriched in low complexity. Residues 255–280 (ESQRKRTVQNVLDLRQNLEETMSSLR) are a coiled coil. The interval 294–336 (YDSDDANPRSVSSLSNRSSPLSWRYGQSSPRLQAGDAPSVGGS) is disordered. 5 positions are modified to phosphoserine: S296, S308, S312, S362, and S391. The segment covering 301 to 315 (PRSVSSLSNRSSPLS) has biased composition (low complexity). Disordered stretches follow at residues 386 to 839 (KSGY…PLPS) and 892 to 989 (MSLP…PMSL). Low complexity-rich tracts occupy residues 411-425 (DESSSISSGLSDASD) and 433-448 (NASSSLNSLPSTPTAS). Residues S452, S474, S476, and S490 each carry the phosphoserine modification. Basic and acidic residues predominate over residues 476–486 (SEEKAPKKLEY). Residues 503-519 (ERPESCDDSSKGGELKK) are compositionally biased toward basic and acidic residues. S528 carries the phosphoserine modification. T534 is modified (phosphothreonine). The residue at position 541 (S541) is a Phosphoserine. Position 544 is a phosphothreonine (T544). Residues 555–566 (GKPEGKATDKGK) are compositionally biased toward basic and acidic residues. T572 is subject to Phosphothreonine. A compositionally biased stretch (basic and acidic residues) spans 581 to 591 (AGRDRLSDAKK). Composition is skewed to polar residues over residues 615 to 635 (GTATVMQTGGSATLSKIQKSS) and 645 to 655 (RKTSLDVSNSA). S648 carries the post-translational modification Phosphoserine. At R688 the chain carries Omega-N-methylarginine. Polar residues-rich tracts occupy residues 698–710 (IDPSLLSTKQGGL) and 724–733 (GRTTPAPVNQ). The stretch at 731–756 (VNQTDREKEKAKAKAVALDSDNISLK) forms a coiled coil. Phosphoserine is present on residues S750, S754, S760, S797, and S808. Over residues 751-773 (DNISLKSIGSPESTPKNQASHPT) the composition is skewed to polar residues. Residues 805-818 (NSNSLDLPSSSDTT) are compositionally biased toward low complexity. The segment covering 902-913 (TPVPTPPAPPAA) has biased composition (pro residues). Residue S1000 is modified to Phosphoserine. T1006 is subject to Phosphothreonine. Residues 1072-1163 (SSAEERMQSE…SEAQAVIQGA (92 aa)) adopt a coiled-coil conformation. Residue T1170 is modified to Phosphothreonine. Disordered stretches follow at residues 1172–1204 (KELRIKRQNSSDSISSLNSITSHSSIGSSKDAD), 1244–1306 (ATPD…EKKE), 1359–1383 (LKVAPGPSSGSTPGQVPGSSALSSP), and 1810–1843 (KLYHLPPPTVGPHSIASPPEDRTVKDSTPSSLDS). S1181 bears the Phosphoserine mark. The span at 1181 to 1200 (SSDSISSLNSITSHSSIGSS) shows a compositional bias: low complexity. The segment covering 1246–1264 (PDSSAPSSPKLQHGSTETA) has biased composition (polar residues). Phosphoserine is present on S1265. The span at 1265–1275 (SPSIKSSTSSS) shows a compositional bias: low complexity. The stretch at 1303-1362 (EKKEVSELRSELWEKEMKLTDIRLEALNSAHQLDQLRETMHNMQLEVDLLKAENDRLKVA) forms a coiled coil. Over residues 1366-1383 (SSGSTPGQVPGSSALSSP) the composition is skewed to polar residues. At S1382 the chain carries Phosphoserine.

It belongs to the Nav/unc-53 family. As to quaternary structure, interacts with tubulin. As to expression, broadly expressed at low levels. Expressed at high levels in heart, skeletal muscle and placenta.

Its subcellular location is the cytoplasm. It is found in the cytoskeleton. Its function is as follows. May be involved in neuronal migration. This Homo sapiens (Human) protein is Neuron navigator 1 (NAV1).